A 207-amino-acid chain; its full sequence is Large ribosomal subunit protein uL4 (207 aa).

The tract at residues 48-75 (THAVKNRSAVSGGGRKPWKQKGTGRARA) is disordered.

Belongs to the universal ribosomal protein uL4 family. In terms of assembly, part of the 50S ribosomal subunit.

Its function is as follows. One of the primary rRNA binding proteins, this protein initially binds near the 5'-end of the 23S rRNA. It is important during the early stages of 50S assembly. It makes multiple contacts with different domains of the 23S rRNA in the assembled 50S subunit and ribosome. Functionally, forms part of the polypeptide exit tunnel. This chain is Large ribosomal subunit protein uL4, found in Leuconostoc citreum (strain KM20).